The sequence spans 501 residues: DDB1- and CUL4-associated factor 12-like protein 1 (501 aa).

Residues 1-37 (MRQADSQTQPSPAEQETPQPAGPSNRSPPTMGPQQTG) are compositionally biased toward polar residues. The disordered stretch occupies residues 1 to 67 (MRQADSQTQP…PAAPMATAGE (67 aa)). WD repeat units lie at residues 185 to 225 (PPSC…PVCL), 230 to 268 (GHRDWIFAIAWMSDTVAVSGSRDGTVALWKVDPDMFNGS), 298 to 337 (PGNRKVRALAFSNKNQELGAVSLDGYFHLWKARSSLSRLL), and 384 to 423 (SREGGTGVRSLSVHQHIVTVGTGHGSLLFYDIRAQKFLEE).

This sequence belongs to the WD repeat DCAF12 family.

This Mus musculus (Mouse) protein is DDB1- and CUL4-associated factor 12-like protein 1 (Dcaf12l1).